A 435-amino-acid polypeptide reads, in one-letter code: MTIEYLKKASLTSKSDASDVQETVRAILADIEAGGDQVALDYAAKFDRYEGSIILSPEEIEAACAKVPEKLKADIRFAHDNVRRFAETQKATLTDVELEVVPGVITGQKAIPVDAAGCYVPGGRYSHIASAIMTVTTAKVAGCKHIMACSPPRPGVGVAPAIVYAAHICGADTIMAIGGVQGVASMAFGLFGLPKAKILVGPGNQFVAEAKRMLFGRVGIDMIAGPTDSLILADRTADPHIVTTDLVSQAEHGYNSPVWLVTDDRALAEKVIEMIPSYIADLPEVNRDNAAAAWRDYAEVILCADREEMAATSDRYAPEHLTVMAEDLDWWLDRLSCYGSLFLGEESTVSYGDKAAGTNHVLPTSGAASYTGGLSVHKYMKIVTWQRGTREGYKPVAEATARIARLEGMEGHARAADVRLAKYFPDETFDLTANG.

3 residues coordinate NAD(+): Tyr-119, Gln-181, and Asn-204. Residues Gln-249 and His-252 each contribute to the Zn(2+) site. Catalysis depends on proton acceptor residues Glu-319 and His-320. Residues Asp-353 and His-412 each contribute to the Zn(2+) site.

It belongs to the histidinol dehydrogenase family. HpsN subfamily. The cofactor is Zn(2+).

The enzyme catalyses (2R)-3-sulfopropanediol + 2 NAD(+) + H2O = (2R)-3-sulfolactate + 2 NADH + 3 H(+). In terms of biological role, catalyzes the NAD-dependent oxidation of (R)-2,3-dihydroxypropane-1-sulfonate to (R)-3-sulfolactate. This Ruegeria pomeroyi (strain ATCC 700808 / DSM 15171 / DSS-3) (Silicibacter pomeroyi) protein is Sulfopropanediol 3-dehydrogenase.